The primary structure comprises 429 residues: MTRRLFILITIMLCLIPALLHSQEGYREVTAAGTHKLTLTVDSPRRLGGSDAPQVARETAEALQFDMVLAGPFTVTAPSAAAASAGIRPGEFDFAPWRGAGVDLLVKSGYTVTGNAMTMEFRLYNVTQGKEILAKRYTGRPGDVRRIAHTFSDDIMAALTGERGPFTGKIAFVSTRAGAKAIFLMDYDGHNVQQLTKNRSINLNPDFSPSGKEIIFTSYRQGNPDLFRRELFTGAEARISSYRGINATGAWSPDGKTIALTLSKDGNSEIYTISRDGKNPHRLTNTSAIEVSPAWSPDVRKIVFVSDRLGKPQIFIMNADGTGVRRLTTSGNYNVSPRWSPKGDRIVYSRQEGGFQIYAINPDGTNDTRLTSEGSNEHPRWSPDGRFITFSSTRGGGEGIYVMRADGSGQTRVSGGKGRDSHPTWSPRW.

The first 22 residues, 1 to 22 (MTRRLFILITIMLCLIPALLHS), serve as a signal peptide directing secretion. 2 disordered regions span residues 362 to 383 (PDGT…RWSP) and 407 to 429 (GSGQ…SPRW). Residues 363–374 (DGTNDTRLTSEG) show a composition bias toward polar residues.

This sequence belongs to the TolB family. In terms of assembly, the Tol-Pal system is composed of five core proteins: the inner membrane proteins TolA, TolQ and TolR, the periplasmic protein TolB and the outer membrane protein Pal. They form a network linking the inner and outer membranes and the peptidoglycan layer.

The protein localises to the periplasm. Part of the Tol-Pal system, which plays a role in outer membrane invagination during cell division and is important for maintaining outer membrane integrity. This chain is Tol-Pal system protein TolB, found in Geobacter metallireducens (strain ATCC 53774 / DSM 7210 / GS-15).